The following is a 221-amino-acid chain: Orotate phosphoribosyltransferase (221 aa).

Lys-26 is a binding site for 5-phospho-alpha-D-ribose 1-diphosphate. 34 to 35 (FF) is an orotate binding site. Residues 72–73 (YK), Arg-99, Lys-100, Lys-103, His-105, and 124–132 (DDVITAGTA) each bind 5-phospho-alpha-D-ribose 1-diphosphate. Positions 128 and 156 each coordinate orotate.

This sequence belongs to the purine/pyrimidine phosphoribosyltransferase family. PyrE subfamily. In terms of assembly, homodimer. Mg(2+) is required as a cofactor.

The enzyme catalyses orotidine 5'-phosphate + diphosphate = orotate + 5-phospho-alpha-D-ribose 1-diphosphate. It functions in the pathway pyrimidine metabolism; UMP biosynthesis via de novo pathway; UMP from orotate: step 1/2. In terms of biological role, catalyzes the transfer of a ribosyl phosphate group from 5-phosphoribose 1-diphosphate to orotate, leading to the formation of orotidine monophosphate (OMP). This is Orotate phosphoribosyltransferase from Colwellia psychrerythraea (strain 34H / ATCC BAA-681) (Vibrio psychroerythus).